A 409-amino-acid polypeptide reads, in one-letter code: Arginine biosynthesis bifunctional protein ArgJ (409 aa).

6 residues coordinate substrate: threonine 156, lysine 182, threonine 193, glutamate 280, asparagine 404, and serine 409. Residue threonine 193 is the Nucleophile of the active site.

This sequence belongs to the ArgJ family. Heterotetramer of two alpha and two beta chains.

The protein localises to the cytoplasm. The catalysed reaction is N(2)-acetyl-L-ornithine + L-glutamate = N-acetyl-L-glutamate + L-ornithine. The enzyme catalyses L-glutamate + acetyl-CoA = N-acetyl-L-glutamate + CoA + H(+). The protein operates within amino-acid biosynthesis; L-arginine biosynthesis; L-ornithine and N-acetyl-L-glutamate from L-glutamate and N(2)-acetyl-L-ornithine (cyclic): step 1/1. It participates in amino-acid biosynthesis; L-arginine biosynthesis; N(2)-acetyl-L-ornithine from L-glutamate: step 1/4. Its function is as follows. Catalyzes two activities which are involved in the cyclic version of arginine biosynthesis: the synthesis of N-acetylglutamate from glutamate and acetyl-CoA as the acetyl donor, and of ornithine by transacetylation between N(2)-acetylornithine and glutamate. This chain is Arginine biosynthesis bifunctional protein ArgJ, found in Nitrosomonas europaea (strain ATCC 19718 / CIP 103999 / KCTC 2705 / NBRC 14298).